Consider the following 657-residue polypeptide: Splicing factor Cactin (657 aa).

Residues 1–15 (MGKDSKKHKKERRRE) show a composition bias toward basic residues. 3 disordered regions span residues 1–83 (MGKD…EDTL), 369–406 (QESE…ISKK), and 472–503 (ADVD…QGAS). Coiled-coil stretches lie at residues 23 to 77 (SDEE…RKDA) and 352 to 403 (RLQL…DEKI). Over residues 26-60 (ERLQKRLAEQRSLKKDEKRRQKEEMKKNESAEEKR) the composition is skewed to basic and acidic residues. Residues 61 to 72 (ARRMEKKMRKDA) are compositionally biased toward basic residues. Positions 389 to 401 (EEEEEEEEDEDDE) are enriched in acidic residues. Residues 489–503 (PSSSAASSGAPQGAS) show a composition bias toward low complexity.

The protein belongs to the CACTIN family. Expressed in pharynx, intestine, vulva and spermatheca (at protein level).

The protein localises to the nucleus. The protein resides in the cytoplasm. Functionally, plays a role in pre-mRNA splicing by facilitating excision of a subset of introns. Plays a role during early embryonic development. Required for the distal tip cell migration at the end of larval development and for gonad morphogenesis. The sequence is that of Splicing factor Cactin (cacn-1) from Caenorhabditis elegans.